We begin with the raw amino-acid sequence, 335 residues long: Aliphatic sulfonates import ATP-binding protein SsuB (335 aa).

Residues 48–71 (PFASGGAFGRAPRDDDDDRRGAGD) are disordered. The ABC transporter domain occupies 74-293 (VRLTRVSKRY…ARASAAFAEL (220 aa)). An ATP-binding site is contributed by 106 to 113 (GRSGCGKS).

The protein belongs to the ABC transporter superfamily. Aliphatic sulfonates importer (TC 3.A.1.17.2) family. As to quaternary structure, the complex is composed of two ATP-binding proteins (SsuB), two transmembrane proteins (SsuC) and a solute-binding protein (SsuA).

Its subcellular location is the cell inner membrane. It carries out the reaction ATP + H2O + aliphatic sulfonate-[sulfonate-binding protein]Side 1 = ADP + phosphate + aliphatic sulfonateSide 2 + [sulfonate-binding protein]Side 1.. Functionally, part of the ABC transporter complex SsuABC involved in aliphatic sulfonates import. Responsible for energy coupling to the transport system. The polypeptide is Aliphatic sulfonates import ATP-binding protein SsuB (Burkholderia thailandensis (strain ATCC 700388 / DSM 13276 / CCUG 48851 / CIP 106301 / E264)).